Here is a 242-residue protein sequence, read N- to C-terminus: Ribonuclease PH (242 aa).

Phosphate-binding positions include Arg-86 and Gly-124–Arg-126.

The protein belongs to the RNase PH family. As to quaternary structure, homohexameric ring arranged as a trimer of dimers.

The enzyme catalyses tRNA(n+1) + phosphate = tRNA(n) + a ribonucleoside 5'-diphosphate. In terms of biological role, phosphorolytic 3'-5' exoribonuclease that plays an important role in tRNA 3'-end maturation. Removes nucleotide residues following the 3'-CCA terminus of tRNAs; can also add nucleotides to the ends of RNA molecules by using nucleoside diphosphates as substrates, but this may not be physiologically important. Probably plays a role in initiation of 16S rRNA degradation (leading to ribosome degradation) during starvation. The polypeptide is Ribonuclease PH (Caulobacter sp. (strain K31)).